A 142-amino-acid polypeptide reads, in one-letter code: Small heat shock protein IbpB (142 aa).

In terms of domain architecture, sHSP spans 26-137 (AGESQSFPPY…AAQRIAISER (112 aa)).

The protein belongs to the small heat shock protein (HSP20) family. In terms of assembly, homodimer. Forms homomultimers of about 100-150 subunits at optimal growth temperatures. Conformation changes to oligomers at high temperatures or high ionic concentrations. The decrease in size of the multimers is accompanied by an increase in chaperone activity.

It localises to the cytoplasm. Associates with aggregated proteins, together with IbpA, to stabilize and protect them from irreversible denaturation and extensive proteolysis during heat shock and oxidative stress. Aggregated proteins bound to the IbpAB complex are more efficiently refolded and reactivated by the ATP-dependent chaperone systems ClpB and DnaK/DnaJ/GrpE. Its activity is ATP-independent. The chain is Small heat shock protein IbpB from Escherichia coli O7:K1 (strain IAI39 / ExPEC).